Here is a 417-residue protein sequence, read N- to C-terminus: MNINQINTKLIKPITPTPQNLKNYHISFLDQHVVKKYIAVVLYYQSAPDNGRLEDSLAETLVHFYPLAGRYIKTDLTVDCSDQGAEFIEAEARGDVRVTDLIGKTDTIHLCPEQYFGLDEGVDDPLLSIQVTRFSCGGATIAVSVSHRVFDVSSLETFLSAWSSASKTGGGVAPVIPSFALASLLPNKDEKFGLDSNKCQGKEQKIAVKRLLFEKRALTRLTSERTSGVRAACAVIAKALIRLDRTTHGKSRDFVVFQPINMRGRTGVPSPKNACGNMSFGSFTRRVSAKEEVGIGELVGLIGDGVRRGIAEYTEILCPDRDGRDVIIHVRNKNIKEVFKSETFVVSFTDWSKFGFYEVDFGWGRPIWSGVGPQRPRGNQTIMMRSKEGDGIEAWVHLNEDDMDLFEQDVEIKLFLS.

Catalysis depends on proton acceptor residues His147 and Asp360.

Belongs to the plant acyltransferase family. In terms of assembly, monomer. In terms of tissue distribution, expressed at higher level in recently opened, fully pigmented flowers.

The catalysed reaction is 4'''-demalonylsalvianin + malonyl-CoA = salvianin + CoA. It participates in pigment biosynthesis; anthocyanin biosynthesis. With respect to regulation, inhibited by the following metal ions: Cd(2+), Cu(2+), Fe(2+), Hg(2+) and Zn(2+). Activity is strongly inhibited by CoA-SH and partially inhibited by acetyl-CoA, caffeic acid and bisdemalonylsalvianin. Its function is as follows. Catalyzes the transfer of the malonyl group from malonyl-CoA to the 4'''-hydroxyl group of the 5-glucosyl moiety of anthocyanins. Anthocyanins are ubiquitous colored pigments that are responsible for petal color. In Salvia splendens (Scarlet sage), this protein is Pelargonidin 3-O-(6-caffeoylglucoside) 5-O-(6-O-malonylglucoside) 4'''-malonyltransferase.